The primary structure comprises 236 residues: Proteasome subunit alpha (236 aa).

The protein belongs to the peptidase T1A family. As to quaternary structure, the 20S proteasome core is composed of 14 alpha and 14 beta subunits that assemble into four stacked heptameric rings, resulting in a barrel-shaped structure. The two inner rings, each composed of seven catalytic beta subunits, are sandwiched by two outer rings, each composed of seven alpha subunits. The catalytic chamber with the active sites is on the inside of the barrel. Has a gated structure, the ends of the cylinder being occluded by the N-termini of the alpha-subunits. Is capped by the proteasome-associated ATPase, ARC.

The protein resides in the cytoplasm. Its pathway is protein degradation; proteasomal Pup-dependent pathway. Its activity is regulated as follows. The formation of the proteasomal ATPase ARC-20S proteasome complex, likely via the docking of the C-termini of ARC into the intersubunit pockets in the alpha-rings, may trigger opening of the gate for substrate entry. Interconversion between the open-gate and close-gate conformations leads to a dynamic regulation of the 20S proteasome proteolysis activity. Component of the proteasome core, a large protease complex with broad specificity involved in protein degradation. The sequence is that of Proteasome subunit alpha from Jonesia denitrificans (strain ATCC 14870 / DSM 20603 / BCRC 15368 / CIP 55.134 / JCM 11481 / NBRC 15587 / NCTC 10816 / Prevot 55134) (Listeria denitrificans).